Reading from the N-terminus, the 49-residue chain is Large ribosomal subunit protein bL33 (49 aa).

The protein belongs to the bacterial ribosomal protein bL33 family.

The protein is Large ribosomal subunit protein bL33 of Leuconostoc citreum (strain KM20).